Here is a 105-residue protein sequence, read N- to C-terminus: MDKKDLFDALDDFSQTLLVTLAEVEAVKKNLKSVVEENIALHLENDKLRERLGEVEKETPTKTKKNRDNLRKLYYDGFHVCTDFYGQRRENDAECMFCDELLFRE.

Residues His79, Cys81, Cys95, and Cys98 each coordinate Zn(2+).

This sequence belongs to the YabA family. Homotetramer. Interacts with both DnaA and DnaN, acting as a bridge between these two proteins. Zn(2+) is required as a cofactor.

Its subcellular location is the cytoplasm. It localises to the nucleoid. Its function is as follows. Involved in control of chromosome replication initiation. Inhibits the cooperative binding of DnaA to the oriC region, thus negatively regulating initiation of chromosome replication. Inhibits the ability of DnaA-ATP to form a helix on DNA; does not disassemble preformed DnaA-DNA helices. Decreases the residence time of DnaA on the chromosome at its binding sites (oriC, replication forks and promoter-binding sites). Tethers DnaA to the replication machinery via the DNA polymerase beta sliding clamp subunit (dnaN). Associates with oriC and other DnaA targets on the chromosome in a DnaA-dependent manner. In Streptococcus sanguinis (strain SK36), this protein is Replication initiation control protein YabA.